A 514-amino-acid polypeptide reads, in one-letter code: 2,3-bisphosphoglycerate-independent phosphoglycerate mutase (514 aa).

Positions 14 and 64 each coordinate Mn(2+). S64 serves as the catalytic Phosphoserine intermediate. Residues H125, 155–156 (RD), R187, R193, 263–266 (RADR), and K336 contribute to the substrate site. The Mn(2+) site is built by D403, H407, D444, H445, and H463.

It belongs to the BPG-independent phosphoglycerate mutase family. Monomer. Mn(2+) is required as a cofactor.

The enzyme catalyses (2R)-2-phosphoglycerate = (2R)-3-phosphoglycerate. It participates in carbohydrate degradation; glycolysis; pyruvate from D-glyceraldehyde 3-phosphate: step 3/5. Functionally, catalyzes the interconversion of 2-phosphoglycerate and 3-phosphoglycerate. This chain is 2,3-bisphosphoglycerate-independent phosphoglycerate mutase, found in Escherichia coli O6:H1 (strain CFT073 / ATCC 700928 / UPEC).